We begin with the raw amino-acid sequence, 1507 residues long: DDB1- and CUL4-associated factor 1 (1507 aa).

A protein kinase-like region spans residues 141–500 (QPLRTYSTGL…STLEILNLED (360 aa)). 2 positions are modified to phosphoserine: serine 202 and serine 255. The tract at residues 242-288 (HLDSGHKTSSRVNSTTKPEDGGLKKNKSAKQGDRENFRKAKQKLGFS) is disordered. Residues 562–593 (SYTHEQIVEMMEFLIEYGPAQLYWEPAEVFLK) form the Chromo domain. The residue at position 701 (lysine 701) is an N6-acetyllysine. At serine 828 the chain carries Phosphoserine. The 33-residue stretch at 846–878 (PEKELLLLIRNHLISKGLGETATVLTKEADLPM) folds into the LisH domain. Threonine 888 carries the phosphothreonine modification. Phosphoserine occurs at positions 895 and 898. Residues 917–947 (AAVGASAPSAPTAHPQPRPPQGPLALPGPSY) form a disordered region. Phosphoserine occurs at positions 979 and 1000. WD repeat units lie at residues 1091–1130 (EDES…EEAS), 1133–1174 (CHNS…DMKH), 1176–1213 (FTED…KLLT), 1215–1247 (FNPD…WDVR), and 1248–1290 (SAQA…LLHT). The interval 1091–1290 (EDESGFTCCA…DLRTFHLLHT (200 aa)) is WD repeat-like region. 2 short sequence motifs (DWD box) span residues 1242 to 1249 (VLWDVRSA) and 1278 to 1285 (EIWDLRTF). Serine 1328 is subject to Phosphoserine. The interval 1393-1507 (RLAEDEDEEE…EDDIILSLNE (115 aa)) is disordered. Acidic residues-rich tracts occupy residues 1396–1483 (EDED…EEVE) and 1490–1501 (DSSDNSDLEDDI). Residues 1418-1507 (DDDTDDLDEL…EDDIILSLNE (90 aa)) form an interaction with NF2 region.

The protein belongs to the VPRBP/DCAF1 family. Component of the DCX (DDB1-CUL4-X-box) E3 ubiquitin-protein ligase complex, named CUL4A-RBX1-DDB1-DCAF1/VPRBP complex. Interacts with DDB1; the interaction is direct. Also forms a ternary complex with DDA1 and DDB1. Interacts with NF2 (via FERM domain). Component of the EDVP complex, a E3 ligase complex containing DYRK2, EDD/UBR5, DDB1 and DCAF1. Interacts with DYRK2; the interaction is direct. Interacts with RAG1; the interaction is direct. Interacts with LLGL1 and LLGL2. Interacts with histone H3. Interacts with ESR1 and LATS1; probably recruited by LATS1 to promote ESR1 ubiquitination and ubiquitin-mediated proteasomal degradation. Directly interacts with TET1, TET2 and TET3 (via C-terminus). Interacts with CEP78; promoting DCAF1 localization to centrosomes. As to quaternary structure, (Microbial infection) Interacts with HIV-1 virus Vpr protein; the interaction is direct. In terms of assembly, (Microbial infection) Interacts with HIV-2 virus Vpx protein; the interaction is direct and the complex recruits SAMHD1 to promote its ubiquitin-dependent proteasomal degradation. (Microbial infection) Interacts (via C-terminus) with human cytomegalovirus protein UL35; this interaction induces the accumulation of cells in the G2 phase of the cell cycle. In terms of tissue distribution, ubiquitously expressed.

The protein resides in the cytoplasm. The protein localises to the nucleus. It localises to the cytoskeleton. It is found in the microtubule organizing center. Its subcellular location is the centrosome. The catalysed reaction is L-seryl-[protein] + ATP = O-phospho-L-seryl-[protein] + ADP + H(+). It catalyses the reaction L-threonyl-[protein] + ATP = O-phospho-L-threonyl-[protein] + ADP + H(+). It functions in the pathway protein modification; protein ubiquitination. Acts both as a substrate recognition component of E3 ubiquitin-protein ligase complexes and as an atypical serine/threonine-protein kinase, playing key roles in various processes such as cell cycle, telomerase regulation and histone modification. Probable substrate-specific adapter of a DCX (DDB1-CUL4-X-box) E3 ubiquitin-protein ligase complex, named CUL4A-RBX1-DDB1-DCAF1/VPRBP complex, which mediates ubiquitination and proteasome-dependent degradation of proteins such as NF2. Involved in the turnover of methylated proteins: recognizes and binds methylated proteins via its chromo domain, leading to ubiquitination of target proteins by the RBX1-DDB1-DCAF1/VPRBP complex. The CUL4A-RBX1-DDB1-DCAF1/VPRBP complex is also involved in B-cell development: DCAF1 is recruited by RAG1 to ubiquitinate proteins, leading to limit error-prone repair during V(D)J recombination. Also part of the EDVP complex, an E3 ligase complex that mediates ubiquitination of proteins such as TERT, leading to TERT degradation and telomerase inhibition. The EDVP complex also mediates ubiquitination and degradation of CCP110. Also acts as an atypical serine/threonine-protein kinase that specifically mediates phosphorylation of 'Thr-120' of histone H2A (H2AT120ph) in a nucleosomal context, thereby repressing transcription. H2AT120ph is present in the regulatory region of many tumor suppresor genes, down-regulates their transcription and is present at high level in a number of tumors. Involved in JNK-mediated apoptosis during cell competition process via its interaction with LLGL1 and LLGL2. By acting on TET dioxygenses, essential for oocyte maintenance at the primordial follicle stage, hence essential for female fertility. Its function is as follows. (Microbial infection) In case of infection by HIV-1 virus, it is recruited by HIV-1 Vpr in order to hijack the CUL4A-RBX1-DDB1-DCAF1/VPRBP function leading to arrest the cell cycle in G2 phase, and also to protect the viral protein from proteasomal degradation by another E3 ubiquitin ligase. The HIV-1 Vpr protein hijacks the CUL4A-RBX1-DDB1-DCAF1/VPRBP complex to promote ubiquitination and degradation of proteins such as TERT and ZIP/ZGPAT. In terms of biological role, (Microbial infection) In case of infection by HIV-2 virus, it is recruited by HIV-2 Vpx in order to hijack the CUL4A-RBX1-DDB1-DCAF1/VPRBP function leading to enhanced efficiency of macrophage infection and promotion of the replication of cognate primate lentiviruses in cells of monocyte/macrophage lineage. This Homo sapiens (Human) protein is DDB1- and CUL4-associated factor 1.